The chain runs to 114 residues: MSLKDYLRQSISKDLEVRHRDSLKIRLGERHPLSVHQHMIAARQIIKSDNAEQQHVISSLSGFLDKQKSFLRVQQKALKQLEKLDVDEIIDTAAEVKAVSNDIKETLITSTELE.

Belongs to the herpesviridae UL96 family.

This chain is Protein U68 (U68), found in Human herpesvirus 6A (strain Uganda-1102) (HHV-6 variant A).